Reading from the N-terminus, the 479-residue chain is Arf-GAP domain and FG repeat-containing protein 2 (479 aa).

The 127-residue stretch at 27–153 (EVWCRRVREL…WYVPPEQVKG (127 aa)) folds into the Arf-GAP domain. Residues 47–70 (CFECAQRGVTYVDITVGSFVCTTC) form a C4-type zinc finger. Disordered regions lie at residues 150 to 223 (QVKG…TKKA) and 450 to 479 (LSQPAGISTNPFMTGSSAFASKPPTTNPFL). Residues 157–167 (SKGSVSATPVQ) are compositionally biased toward polar residues. Lys-174 bears the N6-acetyllysine mark. Residues 194–218 (SSQPGSQSQARSSSQARSSQPPSHS) are compositionally biased toward low complexity. A compositionally biased stretch (polar residues) spans 454–479 (AGISTNPFMTGSSAFASKPPTTNPFL).

Interacts with EPS15R.

The polypeptide is Arf-GAP domain and FG repeat-containing protein 2 (Agfg2) (Mus musculus (Mouse)).